Consider the following 189-residue polypeptide: dCTP deaminase (189 aa).

DCTP is bound by residues 112–117, 136–138, Gln157, Tyr171, and Gln181; these read KSTYAR and TLE. Residue Glu138 is the Proton donor/acceptor of the active site.

It belongs to the dCTP deaminase family. As to quaternary structure, homotrimer.

It catalyses the reaction dCTP + H2O + H(+) = dUTP + NH4(+). It functions in the pathway pyrimidine metabolism; dUMP biosynthesis; dUMP from dCTP (dUTP route): step 1/2. Catalyzes the deamination of dCTP to dUTP. The protein is dCTP deaminase of Acinetobacter baylyi (strain ATCC 33305 / BD413 / ADP1).